Reading from the N-terminus, the 303-residue chain is MPSKAKVAIVGSGNISTDLLYKLLRSEWLEPRWMVGIDPESDGLARAAKLGLETTHEGVDWLLAQPDKPDLVFEATSAYVHRDAAPKYAEAGIRAIDLTPAAVGPAVIPPANLREHLDAPNVNMITCGGQATIPIVYAVSRIVEVPYAEIVASVASVSAGPGTRANIDEFTKTTARGVQTIGGAARGKAIIILNPADPPMIMRDTIFCAIPTDADREAIAASIHDVVKEVQTYVPGYRLLNEPQFDEPSINSGGQALVTTFVEVEGAGDYLPPYAGNLDIMTAAATKVGEEIAKETLVVGGAR.

12–15 (SGNI) lines the NAD(+) pocket. Cysteine 127 acts as the Acyl-thioester intermediate in catalysis. NAD(+)-binding positions include 158 to 166 (SAGPGTRAN) and asparagine 277.

It belongs to the acetaldehyde dehydrogenase family. Monomer. Forms a heterotetramer composed of two aldolase (HsaF) and two dehydrogenase (HsaG) subunits.

It carries out the reaction propanal + NAD(+) + CoA = propanoyl-CoA + NADH + H(+). The catalysed reaction is acetaldehyde + NAD(+) + CoA = acetyl-CoA + NADH + H(+). In terms of biological role, involved in cholesterol degradation. Catalyzes the conversion of propanal to propanoyl-CoA, using NAD(+) and coenzyme A. In Mycobacterium bovis (strain ATCC BAA-935 / AF2122/97), this protein is Propanal dehydrogenase (CoA-propanoylating).